The primary structure comprises 251 residues: 3-deoxy-manno-octulosonate cytidylyltransferase (251 aa).

The protein belongs to the KdsB family.

It localises to the cytoplasm. The enzyme catalyses 3-deoxy-alpha-D-manno-oct-2-ulosonate + CTP = CMP-3-deoxy-beta-D-manno-octulosonate + diphosphate. It participates in nucleotide-sugar biosynthesis; CMP-3-deoxy-D-manno-octulosonate biosynthesis; CMP-3-deoxy-D-manno-octulosonate from 3-deoxy-D-manno-octulosonate and CTP: step 1/1. Its pathway is bacterial outer membrane biogenesis; lipopolysaccharide biosynthesis. Activates KDO (a required 8-carbon sugar) for incorporation into bacterial lipopolysaccharide in Gram-negative bacteria. The polypeptide is 3-deoxy-manno-octulosonate cytidylyltransferase (Brucella abortus (strain 2308)).